The following is a 660-amino-acid chain: DNA ligase (660 aa).

NAD(+) is bound by residues 33–37 (DFVYD), 82–83 (SL), and Glu110. Lys112 acts as the N6-AMP-lysine intermediate in catalysis. The NAD(+) site is built by Arg133, Glu167, Lys281, and Lys305. 4 residues coordinate Zn(2+): Cys396, Cys399, Cys412, and Cys417. The BRCT domain occupies 583–660 (DENKLLVGKK…SFEDIKSYLD (78 aa)).

The protein belongs to the NAD-dependent DNA ligase family. LigA subfamily. Requires Mg(2+) as cofactor. Mn(2+) serves as cofactor.

The catalysed reaction is NAD(+) + (deoxyribonucleotide)n-3'-hydroxyl + 5'-phospho-(deoxyribonucleotide)m = (deoxyribonucleotide)n+m + AMP + beta-nicotinamide D-nucleotide.. In terms of biological role, DNA ligase that catalyzes the formation of phosphodiester linkages between 5'-phosphoryl and 3'-hydroxyl groups in double-stranded DNA using NAD as a coenzyme and as the energy source for the reaction. It is essential for DNA replication and repair of damaged DNA. In Borreliella afzelii (strain PKo) (Borrelia afzelii), this protein is DNA ligase.